We begin with the raw amino-acid sequence, 242 residues long: NAD(P)H-quinone oxidoreductase subunit K (242 aa).

Residues Cys-60, Cys-61, Cys-125, and Cys-156 each contribute to the [4Fe-4S] cluster site.

It belongs to the complex I 20 kDa subunit family. NDH-1 can be composed of about 15 different subunits; different subcomplexes with different compositions have been identified which probably have different functions. Requires [4Fe-4S] cluster as cofactor.

It is found in the cellular thylakoid membrane. It catalyses the reaction a plastoquinone + NADH + (n+1) H(+)(in) = a plastoquinol + NAD(+) + n H(+)(out). The enzyme catalyses a plastoquinone + NADPH + (n+1) H(+)(in) = a plastoquinol + NADP(+) + n H(+)(out). NDH-1 shuttles electrons from an unknown electron donor, via FMN and iron-sulfur (Fe-S) centers, to quinones in the respiratory and/or the photosynthetic chain. The immediate electron acceptor for the enzyme in this species is believed to be plastoquinone. Couples the redox reaction to proton translocation, and thus conserves the redox energy in a proton gradient. Cyanobacterial NDH-1 also plays a role in inorganic carbon-concentration. The protein is NAD(P)H-quinone oxidoreductase subunit K of Prochlorococcus marinus (strain SARG / CCMP1375 / SS120).